An 85-amino-acid chain; its full sequence is Small ribosomal subunit protein uS17 (85 aa).

This sequence belongs to the universal ribosomal protein uS17 family. In terms of assembly, part of the 30S ribosomal subunit.

Functionally, one of the primary rRNA binding proteins, it binds specifically to the 5'-end of 16S ribosomal RNA. The sequence is that of Small ribosomal subunit protein uS17 from Acetivibrio thermocellus (strain ATCC 27405 / DSM 1237 / JCM 9322 / NBRC 103400 / NCIMB 10682 / NRRL B-4536 / VPI 7372) (Clostridium thermocellum).